A 265-amino-acid polypeptide reads, in one-letter code: MKFTIMSKGDQSSDALASTMKEYLLDFGFIMDEQEPDIVISVGGDGTLLYAFHRYYNRLDETAFVGVHTGHLGFYADWLPTEVEKLVIAIAKTPFQVVEYPLLEVIIRYVNGSKESQYLAMNEATVKSAEGTLVTEVEIRGEYFETFRGDGLCISTPSGSTAYNKALGGAIIHPSIEAIQIAEMASINNRVFRTVGSPLVLPKHHTCVLKPTAGMNLQITVDHLTMVHQDVKSIQYRVANEKVRFVRFRPFPFWKRVRDSFVADK.

Asp-45 acts as the Proton acceptor in catalysis. NAD(+)-binding positions include 45 to 46 (DG), 122 to 123 (NE), Arg-148, Asp-150, and Ala-185.

It belongs to the NAD kinase family. Requires a divalent metal cation as cofactor.

Its subcellular location is the cytoplasm. It catalyses the reaction NAD(+) + ATP = ADP + NADP(+) + H(+). Involved in the regulation of the intracellular balance of NAD and NADP, and is a key enzyme in the biosynthesis of NADP. Catalyzes specifically the phosphorylation on 2'-hydroxyl of the adenosine moiety of NAD to yield NADP. The chain is NAD kinase 1 from Bacillus cereus (strain ATCC 10987 / NRS 248).